The primary structure comprises 200 residues: Probable GTP-binding protein EngB (200 aa).

Residues 22–199 enclose the EngB-type G domain; it reads GLDEIALAGR…KDWIQARLYE (178 aa). GTP is bound by residues 30 to 37, 57 to 61, 78 to 81, 145 to 148, and 178 to 180; these read GRSNVGKS, GKTQT, DVPG, TKMD, and FSS. Positions 37 and 59 each coordinate Mg(2+).

It belongs to the TRAFAC class TrmE-Era-EngA-EngB-Septin-like GTPase superfamily. EngB GTPase family. It depends on Mg(2+) as a cofactor.

Functionally, necessary for normal cell division and for the maintenance of normal septation. The chain is Probable GTP-binding protein EngB from Lactobacillus delbrueckii subsp. bulgaricus (strain ATCC 11842 / DSM 20081 / BCRC 10696 / JCM 1002 / NBRC 13953 / NCIMB 11778 / NCTC 12712 / WDCM 00102 / Lb 14).